Consider the following 610-residue polypeptide: Zinc finger protein 823 (610 aa).

The KRAB domain occupies 4–97 (VAFEDVAVNF…VNKNTPRVNP (94 aa)). C2H2-type zinc fingers lie at residues 164 to 186 (FDCK…MAAH), 192 to 214 (YKCK…ERTH), 220 to 242 (YECK…ERIH), 248 to 270 (YECK…ERTH), 276 to 298 (YKCT…ERTH), 304 to 326 (YACK…MIRH), 332 to 354 (HKCK…ETTH), 360 to 382 (YECK…MITH), 388 to 410 (QKCK…ERTH), and 416 to 438 (YQCK…EATH). The segment at 444 to 465 (YKCQCGKAFSDLSSFQNHETTH) adopts a C2H2-type 11; atypical zinc-finger fold. C2H2-type zinc fingers lie at residues 471–493 (YECK…KRTH), 499–521 (YECK…ERIH), 527–549 (YECK…ERIH), 555–577 (YECL…EKTH), and 583–605 (YECK…KRTH).

Belongs to the krueppel C2H2-type zinc-finger protein family.

Its subcellular location is the nucleus. In terms of biological role, may be involved in transcriptional regulation. The polypeptide is Zinc finger protein 823 (ZNF823) (Homo sapiens (Human)).